The sequence spans 295 residues: Multistep phosphorelay regulator 1 (295 aa).

The tract at residues 89–110 (KSENNQQLAANETAGAPEGTEE) is disordered. A compositionally biased stretch (low complexity) spans 97–106 (AANETAGAPE). An HPt domain is found at 182-284 (EHEFSKSIVW…NDFYKDARAY (103 aa)). Residue H221 is modified to Phosphohistidine.

Binds to the msc4 response regulator which is part of a multistep phosphorelay system that transmits oxidative stress signals to the spc1 MAPK cascade. The sequence is that of Multistep phosphorelay regulator 1 (mpr1) from Schizosaccharomyces pombe (strain 972 / ATCC 24843) (Fission yeast).